A 780-amino-acid polypeptide reads, in one-letter code: Potassium/sodium hyperpolarization-activated cyclic nucleotide-gated channel 3 (780 aa).

Residues 1–47 (MEEEARPAVGDGEAATPARETPPAAPAQARAASGGVPESAPEPKRRQ) are disordered. Topologically, residues 1–96 (MEEEARPAVG…PYSDFRFYWD (96 aa)) are cytoplasmic. Residues 13–32 (EAATPARETPPAAPAQARAA) are compositionally biased toward low complexity. The tract at residues 45–90 (RRQLGTLLQPTVNKFSLRVFGSHKAVEIEQERVKSAGAWIIHPYSD) is involved in subunit assembly. The chain crosses the membrane as a helical span at residues 97–117 (LIMLLLMVGNLIVLPVGITFF). Over 118 to 123 (KEENSP) the chain is Extracellular. The helical transmembrane segment at 124-144 (PWIVFNVLSDTFFLLDLVLNF) threads the bilayer. The Cytoplasmic segment spans residues 145–170 (RTGIVVEEGAEILLAPRAIRTRYLRT). A helical membrane pass occupies residues 171-191 (WFLVDLISSIPVDYIFLVVEL). Over 192 to 200 (EPRLDAEVY) the chain is Extracellular. Residues 201 to 221 (KTARALRIVRFTKILSLLRLL) traverse the membrane as a helical; Voltage-sensor segment. Topologically, residues 222–252 (RLSRLIRYMHQWEEIFHMTYDLASAVVRIFN) are cytoplasmic. A helical transmembrane segment spans residues 253–273 (LIGMMLLLCHWDGCLQFLVPM). Residues 274–296 (LQDFPSDCWVSMNRMVNHSWGRQ) lie on the Extracellular side of the membrane. Asparagine 290 carries an N-linked (GlcNAc...) asparagine glycan. Residues 297 to 318 (YSHALFKAMSHMLCIGYGQQAP) constitute an intramembrane region (pore-forming). The Extracellular segment spans residues 319–328 (VGMPDVWLTM). Residues 329–349 (LSMIVGATCYAMFIGHATALI) form a helical membrane-spanning segment. Topologically, residues 350-780 (QSLDSSRRQY…PRGPQISANM (431 aa)) are cytoplasmic. The interval 353-780 (DSSRRQYQEK…PRGPQISANM (428 aa)) is interaction with KCTD3. Residues glycine 491, glutamate 492, cysteine 494, arginine 501, threonine 502, arginine 542, and arginine 545 each contribute to the 3',5'-cyclic AMP site. Residues 549–569 (KNSILQRKRSEPSPGSSSGGV) form a disordered region. Residue serine 634 is modified to Phosphoserine. Residues 687 to 698 (ASLSRTGRSQVS) show a composition bias toward polar residues. Positions 687–780 (ASLSRTGRSQ…PRGPQISANM (94 aa)) are disordered.

Belongs to the potassium channel HCN family. As to quaternary structure, homotetramer. The potassium channel is composed of a homo- or heterotetrameric complex of pore-forming subunits. Interacts with HCN1. Interacts with KCTD3; this interaction increases cell surface expression and current density of this channel. Interacts with PEX5L.

Its subcellular location is the cell membrane. The catalysed reaction is K(+)(in) = K(+)(out). It carries out the reaction Na(+)(in) = Na(+)(out). With respect to regulation, inhibited by Cs(1+) and ivabradine. Unlike HCN2 and HCN4, HCN3 is insensitive to cyclic nucleotides, such as cAMP or cGMP. This lack of sensitivity of HCN3, despite harboring a functional cyclic nucleotide-binding domain (CNBD), may be explained by its shorter C-terminal sequence, which may alter the normal autoinhibition of the channel. Phosphatidylinositol-4,5-bisphosphate (PIP(2)) shifts HCN3 activation to more depolarized potentials and accelerated activation kinetics. Functionally, hyperpolarization-activated ion channel that are permeable to sodium and potassium ions, with an about 3:1 preference for potassium ions. Contributes to the native pacemaker currents in heart (If) and in neurons (Ih). In particular, plays a pivotal role in maintaining excitability and promoting rhythmic burst firing within hypothalamic nuclei. Exerts a significant influence on the configuration of the cardiac action potential waveform. Does not appear to play a prominent role in the processing of acute, neuropathic, or inflammatory pain. In Rattus norvegicus (Rat), this protein is Potassium/sodium hyperpolarization-activated cyclic nucleotide-gated channel 3 (Hcn3).